The chain runs to 278 residues: S-formylglutathione hydrolase YeiG (278 aa).

Residues serine 145, aspartate 223, and histidine 256 each act as charge relay system in the active site.

Belongs to the esterase D family.

The enzyme catalyses S-formylglutathione + H2O = formate + glutathione + H(+). Its function is as follows. Serine hydrolase involved in the detoxification of formaldehyde. Hydrolyzes S-formylglutathione to glutathione and formate. This is S-formylglutathione hydrolase YeiG (yeiG) from Escherichia coli O6:K15:H31 (strain 536 / UPEC).